The chain runs to 336 residues: GTPase Obg (336 aa).

An Obg domain is found at 1-159 (MKFIDEATII…RRLQLELILL (159 aa)). Residues 160 to 333 (ADVGLLGLPN…LCRDIMLFIN (174 aa)) form the OBG-type G domain. GTP contacts are provided by residues 166-173 (GLPNVGKS), 191-195 (FTTLV), 213-216 (DIPG), 283-286 (NKLD), and 314-316 (SAM). Residues serine 173 and threonine 193 each coordinate Mg(2+).

This sequence belongs to the TRAFAC class OBG-HflX-like GTPase superfamily. OBG GTPase family. As to quaternary structure, monomer. The cofactor is Mg(2+).

Its subcellular location is the cytoplasm. An essential GTPase which binds GTP, GDP and possibly (p)ppGpp with moderate affinity, with high nucleotide exchange rates and a fairly low GTP hydrolysis rate. Plays a role in control of the cell cycle, stress response, ribosome biogenesis and in those bacteria that undergo differentiation, in morphogenesis control. The protein is GTPase Obg of Baumannia cicadellinicola subsp. Homalodisca coagulata.